A 131-amino-acid chain; its full sequence is Small ribosomal subunit protein uS8 (131 aa).

It belongs to the universal ribosomal protein uS8 family. Part of the 30S ribosomal subunit. Contacts proteins S5 and S12.

In terms of biological role, one of the primary rRNA binding proteins, it binds directly to 16S rRNA central domain where it helps coordinate assembly of the platform of the 30S subunit. This is Small ribosomal subunit protein uS8 from Bordetella petrii (strain ATCC BAA-461 / DSM 12804 / CCUG 43448).